The chain runs to 628 residues: tRNA uridine 5-carboxymethylaminomethyl modification enzyme MnmG (628 aa).

13-18 is a binding site for FAD; the sequence is GAGHAG. 273–287 is a binding site for NAD(+); it reads GPRYCPSIEDKIVRF.

Belongs to the MnmG family. Homodimer. Heterotetramer of two MnmE and two MnmG subunits. FAD serves as cofactor.

The protein localises to the cytoplasm. NAD-binding protein involved in the addition of a carboxymethylaminomethyl (cmnm) group at the wobble position (U34) of certain tRNAs, forming tRNA-cmnm(5)s(2)U34. This is tRNA uridine 5-carboxymethylaminomethyl modification enzyme MnmG from Buchnera aphidicola subsp. Acyrthosiphon pisum (strain Tuc7).